The primary structure comprises 520 residues: AAA-ATPase At5g57480 (520 aa).

The N-terminal stretch at 1–24 (MKEYWTSLASLLGVLAFCQSLMQS) is a signal peptide. 244 to 251 (GPPGTGKS) contacts ATP. 2 disordered regions span residues 307–340 (KKNS…EEGG) and 467–520 (NVKD…TRED). Gly residues predominate over residues 328–340 (SGSGSGGSGEEGG). The segment covering 497-512 (QNEDEDHDEEEIELED) has biased composition (acidic residues).

It belongs to the AAA ATPase family. BCS1 subfamily. The cofactor is Mg(2+).

The enzyme catalyses ATP + H2O = ADP + phosphate + H(+). This is AAA-ATPase At5g57480 from Arabidopsis thaliana (Mouse-ear cress).